The primary structure comprises 269 residues: Ribosomal RNA small subunit methyltransferase J (269 aa).

Residues 125-126 (ER) and Asp179 contribute to the S-adenosyl-L-methionine site.

The protein belongs to the methyltransferase superfamily. RsmJ family.

The protein resides in the cytoplasm. It carries out the reaction guanosine(1516) in 16S rRNA + S-adenosyl-L-methionine = N(2)-methylguanosine(1516) in 16S rRNA + S-adenosyl-L-homocysteine + H(+). Specifically methylates the guanosine in position 1516 of 16S rRNA. The sequence is that of Ribosomal RNA small subunit methyltransferase J from Pseudomonas syringae pv. tomato (strain ATCC BAA-871 / DC3000).